The chain runs to 2141 residues: Oxygen-regulated protein 1 (2141 aa).

Residues 1–10 show a composition bias toward polar residues; the sequence is MSETSSTSVS. The tract at residues 1–20 is disordered; the sequence is MSETSSTSVSMIHRSFEGQG. One can recognise a Doublecortin 1 domain in the interval 34-116; sequence KKISFYKSGD…RRKVQPVDLD (83 aa). Residues 126–149 form a disordered region; sequence LSSRAISAHAQRSPPTSIGAAGAP. The Doublecortin 2 domain maps to 156–235; sequence RRLLVFRNGD…REPFKPGNYD (80 aa). Disordered stretches follow at residues 259-278, 1432-1458, and 1589-1612; these read RSES…SQIY, YTSS…SSER, and DWSE…GPNG. Over residues 268–278 the composition is skewed to polar residues; the sequence is HVPSSPRSQIY. Residues 1435–1444 are compositionally biased toward basic and acidic residues; the sequence is SDKEDSKTSE. Composition is skewed to polar residues over residues 1448–1458 and 1598–1610; these read SITNSMTSSER and ENEQ…SDGP.

Interacts (via the doublecortin domains) with microtubules. Interacts with RP1L1. Interacts with MAK.

The protein localises to the cytoplasm. It is found in the cytoskeleton. It localises to the cilium axoneme. Its subcellular location is the cell projection. The protein resides in the cilium. The protein localises to the photoreceptor outer segment. Microtubule-associated protein regulating the stability and length of the microtubule-based axoneme of photoreceptors. Required for the differentiation of photoreceptor cells, it plays a role in the organization of the outer segment of rod and cone photoreceptors ensuring the correct orientation and higher-order stacking of outer segment disks along the photoreceptor axoneme. This chain is Oxygen-regulated protein 1 (RP1), found in Canis lupus familiaris (Dog).